A 632-amino-acid chain; its full sequence is MSYLSRSALARSVGAKHLTGVLRKIGRRGGRSMHVLPLASPSTLLKISSQTLRQDFTVLGARNFHSSSVRLNELTDNLRKLDTIEREVEDVDVCIVGAGPAGLSAAIRIKQQAAKANRDIRVVVLEKAAEPGNHSVSGAVIQPTALDELLPNWRDDPPENCTAVTHDKMKFLIPKLHFPIPVPPAMKNHGNYVMSLAEFTRWLAAKAEEYGVEIYPSFAASEVLYNKDGSVIGVATNDFGVDSKGLPKDNFERGMAFHAPVTLFAEGAHGSLSKSIIKRFNLRGNCEPQTYGLGVKEVWRVPDENFRKGEVAHTLGWPMRNDTYGGGFMYQFGDNYVTVGLVVGLDYPNPYVSPALEFQRMKQNPFFAKVLKGGKCLEYAARALNEGGYQAIPKLVFPGGALIGCSAGFVNVAKIKGTHTAMKSGIVAADAIVDAFGRDAASKPLLLNDYEENLKNTYVFKELYSVRNIRPSFHSFLGNYGGMAYSAVEAYVLKGRVPWTLKHKGGDAKATKSASKYKPINYPKPDNVLSFDIPTSVSRSATMHAENQPCHLFDHRPKDRKSCFETYKGVENKFCPAGVYEYVNDEASSYGKRFVINSQNCVHCKTCDIKDPLQGIQWKTPQGGDGPKYTLT.

Position 93–107 (93–107) interacts with FAD; that stretch reads VCIVGAGPAGLSAAI. [4Fe-4S] cluster contacts are provided by cysteine 575, cysteine 601, cysteine 604, and cysteine 607. A 4Fe-4S ferredoxin-type domain is found at 592-621; sequence KRFVINSQNCVHCKTCDIKDPLQGIQWKTP.

This sequence belongs to the ETF-QO/FixC family. [4Fe-4S] cluster serves as cofactor. Requires FAD as cofactor.

The protein localises to the mitochondrion inner membrane. The catalysed reaction is a ubiquinone + reduced [electron-transfer flavoprotein] = a ubiquinol + oxidized [electron-transfer flavoprotein] + H(+). Functionally, accepts electrons from ETF and reduces ubiquinone. The sequence is that of Probable electron transfer flavoprotein-ubiquinone oxidoreductase, mitochondrial from Schizosaccharomyces pombe (strain 972 / ATCC 24843) (Fission yeast).